Consider the following 384-residue polypeptide: Tryptophan--tRNA ligase (384 aa).

A 'HIGH' region motif is present at residues 81–89 (PSGPMHIGH). A 'KMSKS' region motif is present at residues 252-256 (KMSAS).

Belongs to the class-I aminoacyl-tRNA synthetase family.

Its subcellular location is the cytoplasm. The enzyme catalyses tRNA(Trp) + L-tryptophan + ATP = L-tryptophyl-tRNA(Trp) + AMP + diphosphate + H(+). This Thermococcus onnurineus (strain NA1) protein is Tryptophan--tRNA ligase.